Consider the following 1503-residue polypeptide: Rho GTPase-activating protein 5 (1503 aa).

4 consecutive FF domains span residues 267 to 325 (QLVV…HIEQ), 366 to 420 (KLME…HVQH), 427 to 481 (RIEM…HQRE), and 482 to 548 (IVEK…HIGF). A 3'-nitrotyrosine modification is found at Y550. 2 positions are modified to phosphoserine: S590 and S765. The region spanning 590-763 (STNIDKVNLF…LESVKHNLDV (174 aa)) is the pG1 pseudoGTPase domain. Residues 779-944 (RIVMCAMCGD…FSDVLEKKNM (166 aa)) enclose the pG2 pseudoGTPase domain. A phosphoserine mark is found at S951 and S968. Disordered stretches follow at residues 975 to 1004 (YNNY…LPTP), 1022 to 1050 (HSTP…PKTN), and 1069 to 1091 (NPRK…SDNY). Residues 1036–1045 (VPPPIKPKPV) are compositionally biased toward pro residues. S1115 is modified (phosphoserine). Disordered regions lie at residues 1129–1157 (NTQG…YKYK) and 1169–1255 (YRRT…TRRN). The span at 1141–1151 (RTSKGHGERRP) shows a compositional bias: basic and acidic residues. A phosphoserine mark is found at S1196, S1203, and S1219. In terms of domain architecture, Rho-GAP spans 1263 to 1450 (MPLQDLVTAE…TFIQQCQFFF (188 aa)).

As to quaternary structure, may interact with RASA1/p120GAP. Expressed in spinal cord, cerebellum, kidney, testis and lung.

It localises to the cytoplasm. It is found in the cell membrane. In terms of biological role, GTPase-activating protein for Rho family members. In Mus musculus (Mouse), this protein is Rho GTPase-activating protein 5 (Arhgap5).